The sequence spans 542 residues: Prolyl 4-hydroxylase subunit alpha-3 (542 aa).

The N-terminal stretch at 1-24 (MGPGARLALLALLALGGDPAAATG) is a signal peptide. The stretch at 105-129 (LEATENIRALKDGYEKVEQDLPAFE) forms a coiled coil. A TPR repeat occupies 225-258 (EDALDYLAFACFQVGNVSCALSLSREFLVYSPDN). The N-linked (GlcNAc...) asparagine glycan is linked to Asn240. Positions 420 to 527 (YAEYLQVVNY…KWVANKWIHE (108 aa)) constitute a Fe2OG dioxygenase domain. Residues His438 and Asp440 each coordinate Fe cation. Asn480 carries N-linked (GlcNAc...) asparagine glycosylation. His508 provides a ligand contact to Fe cation. Position 518 (Lys518) interacts with 2-oxoglutarate.

It belongs to the P4HA family. Heterotetramer of two alpha-3 chains and two beta chains (the beta chain is the multi-functional PDI). Fe(2+) is required as a cofactor. The cofactor is L-ascorbate. In terms of processing, N-glycosylation plays no role in the catalytic activity.

The protein resides in the endoplasmic reticulum lumen. It carries out the reaction L-prolyl-[collagen] + 2-oxoglutarate + O2 = trans-4-hydroxy-L-prolyl-[collagen] + succinate + CO2. Its function is as follows. Catalyzes the post-translational formation of 4-hydroxyproline in -Xaa-Pro-Gly- sequences in collagens and other proteins. This is Prolyl 4-hydroxylase subunit alpha-3 (P4ha3) from Mus musculus (Mouse).